We begin with the raw amino-acid sequence, 391 residues long: Succinate--CoA ligase [GDP-forming] subunit beta, mitochondrial (391 aa).

Positions 5-233 (KKIMADHGVT…NAEFRQKEIF (229 aa)) constitute an ATP-grasp domain. GTP contacts are provided by residues Gln16, 49–51 (GRG), and Leu105. Mg(2+) contacts are provided by Asn202 and Asp216. Substrate is bound by residues Asn267 and 324-326 (GIV).

This sequence belongs to the succinate/malate CoA ligase beta subunit family. GTP-specific subunit beta subfamily. In terms of assembly, heterodimer of an alpha and a beta subunit. The beta subunit determines specificity for GTP. The cofactor is Mg(2+). Widely expressed. Not present in breast muscle.

It is found in the mitochondrion. The enzyme catalyses GTP + succinate + CoA = succinyl-CoA + GDP + phosphate. The protein operates within carbohydrate metabolism; tricarboxylic acid cycle; succinate from succinyl-CoA (ligase route): step 1/1. GTP-specific succinyl-CoA synthetase functions in the citric acid cycle (TCA), coupling the hydrolysis of succinyl-CoA to the synthesis of GTP and thus represents the only step of substrate-level phosphorylation in the TCA. The beta subunit provides nucleotide specificity of the enzyme and binds the substrate succinate, while the binding sites for coenzyme A and phosphate are found in the alpha subunit. The sequence is that of Succinate--CoA ligase [GDP-forming] subunit beta, mitochondrial from Columba livia (Rock dove).